An 83-amino-acid chain; its full sequence is Cytochrome c oxidase subunit 7A2, mitochondrial (83 aa).

The N-terminal 23 residues, 1-23, are a transit peptide targeting the mitochondrion; the sequence is MLRNLLALRQIGQRTISTASRRH. The Mitochondrial matrix segment spans residues 24–48; the sequence is FKNKVPEKQKLFQEDDEIPLYLKGG. Residue Lys-33 is modified to N6-acetyllysine. The helical transmembrane segment at 49 to 77 threads the bilayer; the sequence is VADALLYRATMILTVGGTAYAIYELAVAS. Over 78-83 the chain is Mitochondrial intermembrane; that stretch reads FPKKQE.

The protein belongs to the cytochrome c oxidase VIIa family. In terms of assembly, component of the cytochrome c oxidase (complex IV, CIV), a multisubunit enzyme composed of 14 subunits. The complex is composed of a catalytic core of 3 subunits MT-CO1, MT-CO2 and MT-CO3, encoded in the mitochondrial DNA, and 11 supernumerary subunits COX4I1 (or COX4I2), COX5A, COX5B, COX6A1 (or COX6A2), COX6B1 (or COX6B2), COX6C, COX7A2 (or COX7A1), COX7B, COX7C, COX8A and NDUFA4, which are encoded in the nuclear genome. The complex exists as a monomer or a dimer and forms supercomplexes (SCs) in the inner mitochondrial membrane with NADH-ubiquinone oxidoreductase (complex I, CI) and ubiquinol-cytochrome c oxidoreductase (cytochrome b-c1 complex, complex III, CIII), resulting in different assemblies (supercomplex SCI(1)III(2)IV(1) and megacomplex MCI(2)III(2)IV(2)). Interacts with PET100.

It localises to the mitochondrion inner membrane. Its pathway is energy metabolism; oxidative phosphorylation. Functionally, component of the cytochrome c oxidase, the last enzyme in the mitochondrial electron transport chain which drives oxidative phosphorylation. The respiratory chain contains 3 multisubunit complexes succinate dehydrogenase (complex II, CII), ubiquinol-cytochrome c oxidoreductase (cytochrome b-c1 complex, complex III, CIII) and cytochrome c oxidase (complex IV, CIV), that cooperate to transfer electrons derived from NADH and succinate to molecular oxygen, creating an electrochemical gradient over the inner membrane that drives transmembrane transport and the ATP synthase. Cytochrome c oxidase is the component of the respiratory chain that catalyzes the reduction of oxygen to water. Electrons originating from reduced cytochrome c in the intermembrane space (IMS) are transferred via the dinuclear copper A center (CU(A)) of subunit 2 and heme A of subunit 1 to the active site in subunit 1, a binuclear center (BNC) formed by heme A3 and copper B (CU(B)). The BNC reduces molecular oxygen to 2 water molecules using 4 electrons from cytochrome c in the IMS and 4 protons from the mitochondrial matrix. This Homo sapiens (Human) protein is Cytochrome c oxidase subunit 7A2, mitochondrial (COX7A2).